A 354-amino-acid polypeptide reads, in one-letter code: Guanine nucleotide-binding protein G(i) subunit alpha-1 (354 aa).

Glycine 2 is lipidated: N-myristoyl glycine. The S-palmitoyl cysteine moiety is linked to residue cysteine 3. In terms of domain architecture, G-alpha spans 32–354; sequence REVKLLLLGA…KNNLKDCGLF (323 aa). The segment at 35–48 is G1 motif; sequence KLLLLGAGESGKST. GTP contacts are provided by residues 43-48, 150-151, and 175-178; these read ESGKST, DS, and LRTR. Serine 47 lines the Mg(2+) pocket. The G2 motif stretch occupies residues 173–181; it reads DVLRTRVKT. Threonine 181 lines the Mg(2+) pocket. The G3 motif stretch occupies residues 196–205; sequence FKMFDVGGQR. GTP contacts are provided by residues 200 to 204, 269 to 272, and alanine 326; these read DVGGQ and NKKD. The interval 265–272 is G4 motif; that stretch reads ILFLNKKD. The G5 motif stretch occupies residues 324–329; sequence TCATDT.

Belongs to the G-alpha family. G(i/o/t/z) subfamily. In terms of assembly, heterotrimeric G proteins are composed of 3 units; alpha, beta and gamma. The alpha chain contains the guanine nucleotide binding site. Part of a spindle orientation complex. Identified in complex with the beta subunit GNB1 and the gamma subunit GNG1. Identified in complex with the beta subunit GNB1 and the gamma subunit GNG2. GTP binding causes dissociation of the heterotrimer, liberating the individual subunits so that they can interact with downstream effector proteins. Myristoylation at Gly-2 is required for membrane anchoring before palmitoylation. In terms of processing, palmitoylation at Cys-3 varies with membrane lipid composition.

It localises to the nucleus. It is found in the cytoplasm. The protein resides in the cell membrane. The protein localises to the cytoskeleton. Its subcellular location is the microtubule organizing center. It localises to the centrosome. It is found in the cell cortex. The protein resides in the membrane. The enzyme catalyses GTP + H2O = GDP + phosphate + H(+). In terms of biological role, guanine nucleotide-binding proteins (G proteins) function as transducers downstream of G protein-coupled receptors (GPCRs) in numerous signaling cascades. The alpha chain contains the guanine nucleotide binding site and alternates between an active, GTP-bound state and an inactive, GDP-bound state. Signaling by an activated GPCR promotes GDP release and GTP binding. The alpha subunit has a low GTPase activity that converts bound GTP to GDP, thereby terminating the signal. Both GDP release and GTP hydrolysis are modulated by numerous regulatory proteins. Signaling is mediated via effector proteins, such as adenylate cyclase. Inhibits adenylate cyclase activity, leading to decreased intracellular cAMP levels. Required for cortical dynein-dynactin complex recruitment during metaphase. This is Guanine nucleotide-binding protein G(i) subunit alpha-1 (gnai1) from Xenopus laevis (African clawed frog).